The following is a 471-amino-acid chain: MTAKRAIGRHESLADKVHRHRGLLLVISIPIVLIALVLLLMPGTSTSVSVIEYTMKNHEGGSNSRGPKNYAVIFDAGSSGSRVHVYCFDQNLDLVPLENELELFLQLKPGLSAYPNDPRQSANSLVTLLDKAEASVPRELRPKTPVRVGATAGLRALGHQASENILQAVRELLKGRSRLKTEANAVTVLDGTQEGSYQWVTINYLLRTLGKPYSDTVGVVDLGGGSVQMAYAIPEEDAATAPKPVEGEDSYVREMYLKGRKYFLYVHSYLHYGLLAARAEILKVSEDSNNPCIATGYAGTYKYGGKAFKAAASPSGASLDECRRVAINALKVNNSLCTHMKCTFGGVWNGGGGGGQKKMFVASFFFDRAAEAGFVDPNQPVAEVRPLDFEKAANKACNMRMEEGKSKFPRVEEDNLPYLCLDLVYQYTLLVDGFGLKPSQTITLVKKVKYGDYAVEAAWPLGSAIEAVSSP.

At Met-1–Arg-21 the chain is on the cytoplasmic side. The chain crosses the membrane as a helical; Signal-anchor for type II membrane protein span at residues Gly-22–Pro-42. Topologically, residues Gly-43–Pro-471 are lumenal. Val-72 to Arg-82 is an ATP binding site. The active-site Proton acceptor is the Glu-194. ATP is bound at residue Gly-218–Gln-228. Asn-333 is a glycosylation site (N-linked (GlcNAc...) asparagine).

Belongs to the GDA1/CD39 NTPase family. Requires Ca(2+) as cofactor. As to expression, expressed in roots, root hairs, root cap, leaves, stems, trichomes, phloem throughout the plant, guard cells, filaments of young stamens, stipules, papillae of stigmas, pollen, pollen tubes and the abscission zone of siliques.

Its subcellular location is the golgi apparatus membrane. It is found in the membrane. The catalysed reaction is a ribonucleoside 5'-triphosphate + 2 H2O = a ribonucleoside 5'-phosphate + 2 phosphate + 2 H(+). In terms of biological role, catalyzes the hydrolysis of phosphoanhydride bonds of nucleoside tri- and di-phosphates. Substrate preference is ATP &gt; ADP. Functions with APY2 to reduce extracellular ATP level which is essential for pollen germination and normal plant development. Plays a role in the regulation of stomatal function by modulating extracellular ATP levels in guard cells. In Arabidopsis thaliana (Mouse-ear cress), this protein is Apyrase 1 (APY1).